We begin with the raw amino-acid sequence, 343 residues long: Ribosomal RNA small subunit methyltransferase C (343 aa).

It belongs to the methyltransferase superfamily. RsmC family. Monomer.

It localises to the cytoplasm. It catalyses the reaction guanosine(1207) in 16S rRNA + S-adenosyl-L-methionine = N(2)-methylguanosine(1207) in 16S rRNA + S-adenosyl-L-homocysteine + H(+). Its function is as follows. Specifically methylates the guanine in position 1207 of 16S rRNA in the 30S particle. The chain is Ribosomal RNA small subunit methyltransferase C from Escherichia coli O17:K52:H18 (strain UMN026 / ExPEC).